The following is a 61-amino-acid chain: Large ribosomal subunit protein uL30 (61 aa).

This sequence belongs to the universal ribosomal protein uL30 family. In terms of assembly, part of the 50S ribosomal subunit.

The sequence is that of Large ribosomal subunit protein uL30 from Chlorobium phaeobacteroides (strain DSM 266 / SMG 266 / 2430).